Consider the following 432-residue polypeptide: MRDYVNWLRHASPYINAHRDCTFVVMLPGEGIEHPNFGNIVHDLVLLHSLGVRLVLVHGSRPQIEARLAARGLTPRFHQNLRITDVPTLECVIDAVGSLRLAIEARLSMDMAASPMQGARLRVVGGNFVTARPIGVVDGIDYLHTGEVRRIDRKGIGRQLDERAIVLLSPLGYSPTGEIFNLACEDVATRAAIDLKADKLLLFGAEPGLLDGQGTLIRELRPQQVAAHLERLGADYQGELLDAAAQACRAGVPRSHMVSYAEDGALLTELFTRDGGGTLVTQEQFEKLREATIEDVGGLLELIRPLEEQGILVRRSREVLEREIGQFSIVERDGLIIACAALYPIADSDAGELACLAVNPDYRHGGRGDELLERIEARARALGLKTLFVLTTRTAHWFRERGFQPSGVERLPAARASLYNYQRQSKVFEKAL.

An N-acetyltransferase domain is found at 286–425 (EKLREATIED…ASLYNYQRQS (140 aa)).

This sequence belongs to the acetyltransferase family. ArgA subfamily.

The protein resides in the cytoplasm. The catalysed reaction is L-glutamate + acetyl-CoA = N-acetyl-L-glutamate + CoA + H(+). Its pathway is amino-acid biosynthesis; L-arginine biosynthesis; N(2)-acetyl-L-ornithine from L-glutamate: step 1/4. The protein is Amino-acid acetyltransferase of Azotobacter vinelandii (strain DJ / ATCC BAA-1303).